We begin with the raw amino-acid sequence, 367 residues long: D-alanine--D-alanine ligase (367 aa).

One can recognise an ATP-grasp domain in the interval 148–357 (KMAFEQAGLP…FPELVDKLVQ (210 aa)). Position 184-239 (184-239 (EASLGYPCFVKPANLGSSVGISKVRSRQELEDALDNAANYDRRIIVEAGVVAREVE)) interacts with ATP. Mg(2+) is bound by residues Asp310, Glu324, and Asn326.

This sequence belongs to the D-alanine--D-alanine ligase family. Mg(2+) is required as a cofactor. Requires Mn(2+) as cofactor.

The protein resides in the cytoplasm. It catalyses the reaction 2 D-alanine + ATP = D-alanyl-D-alanine + ADP + phosphate + H(+). It participates in cell wall biogenesis; peptidoglycan biosynthesis. In terms of biological role, cell wall formation. In Trichormus variabilis (strain ATCC 29413 / PCC 7937) (Anabaena variabilis), this protein is D-alanine--D-alanine ligase.